The following is a 275-amino-acid chain: Tryptophan synthase alpha chain (275 aa).

Active-site proton acceptor residues include glutamate 51 and glutamate 62.

The protein belongs to the TrpA family. In terms of assembly, tetramer of two alpha and two beta chains.

It catalyses the reaction (1S,2R)-1-C-(indol-3-yl)glycerol 3-phosphate + L-serine = D-glyceraldehyde 3-phosphate + L-tryptophan + H2O. Its pathway is amino-acid biosynthesis; L-tryptophan biosynthesis; L-tryptophan from chorismate: step 5/5. Its function is as follows. The alpha subunit is responsible for the aldol cleavage of indoleglycerol phosphate to indole and glyceraldehyde 3-phosphate. The protein is Tryptophan synthase alpha chain of Caulobacter sp. (strain K31).